The following is a 193-amino-acid chain: p53 apoptosis effector related to PMP-22 (193 aa).

4 helical membrane passes run 12-32, 79-99, 110-130, and 151-171; these read RWILPLLLLSAIAFDIIALAG, AMLFCGFIILVICFILSFFAL, VIGGLLALAAVFQIISLVIYP, and WAYGFGWAATIILIGCAFFFC.

The protein belongs to the TMEM47 family. In terms of assembly, (Microbial infection) Interacts with S.typhimurium sipA and sctB1/sipC. As to expression, expressed in skin, heart, placental, liver, pancreas, keratinocytes and dermal fibroblasts. May translocate to the intestinal apical epithelial cell surface via sipA and sctB1/sipC-promoted exocytic translocation following infection by S. Typhimurium.

It is found in the cell junction. It localises to the desmosome. The protein localises to the cell membrane. Its subcellular location is the cytoplasm. Functionally, component of intercellular desmosome junctions. Plays a role in stratified epithelial integrity and cell-cell adhesion by promoting desmosome assembly. Thereby plays a role in barrier function of the skin against infection. Plays a role in mammary epithelial tissue homeostasis and remodeling during and after pregnancy, potentially via its involvement in desmosome cell-cell junctions. Required for tooth enamel development via facilitating desmosome-mediated ameloblast adhesion to the stratum intermedium during the transitional stage of amelogenesis. May also play a role in downstream transcriptional regulation of other genes involved in amelogenesis such as AMBN, ENAM, MMP20 and KLK4. Plays a role as an effector in the TP53-dependent apoptotic pathway. Positively regulates apoptosis in T-helper 17 (Th17) cell populations via caspase-dependent signaling. Promotes neutrophil transepithelial migration in response to chemoattractants such as hepoxilin A3 (HXA3), N-Formylmethionyl-leucyl-phenylalanine (fMLP) and CXCL8/IL-8. Required for neutrophil transepithelial migration in response to S.typhimurium infection. May act as a positive regulator of endothelial cell apoptosis in response to blood flow-derived shear stress. The polypeptide is p53 apoptosis effector related to PMP-22 (Homo sapiens (Human)).